The sequence spans 438 residues: Xylose isomerase (438 aa).

Residues histidine 103 and aspartate 106 contribute to the active site. Mg(2+) is bound by residues glutamate 234, glutamate 270, histidine 273, aspartate 298, aspartate 309, aspartate 311, and aspartate 341.

It belongs to the xylose isomerase family. Homotetramer. Requires Mg(2+) as cofactor.

It is found in the cytoplasm. The enzyme catalyses alpha-D-xylose = alpha-D-xylulofuranose. The chain is Xylose isomerase from Phocaeicola vulgatus (strain ATCC 8482 / DSM 1447 / JCM 5826 / CCUG 4940 / NBRC 14291 / NCTC 11154) (Bacteroides vulgatus).